A 304-amino-acid polypeptide reads, in one-letter code: Acetyl-coenzyme A carboxylase carboxyl transferase subunit beta (304 aa).

In terms of domain architecture, CoA carboxyltransferase N-terminal spans Val25 to Thr294. Positions 29, 32, 48, and 51 each coordinate Zn(2+). Residues Cys29–Cys51 form a C4-type zinc finger.

It belongs to the AccD/PCCB family. In terms of assembly, acetyl-CoA carboxylase is a heterohexamer composed of biotin carboxyl carrier protein (AccB), biotin carboxylase (AccC) and two subunits each of ACCase subunit alpha (AccA) and ACCase subunit beta (AccD). Requires Zn(2+) as cofactor.

The protein resides in the cytoplasm. It carries out the reaction N(6)-carboxybiotinyl-L-lysyl-[protein] + acetyl-CoA = N(6)-biotinyl-L-lysyl-[protein] + malonyl-CoA. Its pathway is lipid metabolism; malonyl-CoA biosynthesis; malonyl-CoA from acetyl-CoA: step 1/1. Functionally, component of the acetyl coenzyme A carboxylase (ACC) complex. Biotin carboxylase (BC) catalyzes the carboxylation of biotin on its carrier protein (BCCP) and then the CO(2) group is transferred by the transcarboxylase to acetyl-CoA to form malonyl-CoA. The protein is Acetyl-coenzyme A carboxylase carboxyl transferase subunit beta of Yersinia pestis bv. Antiqua (strain Nepal516).